The chain runs to 346 residues: [LysW]-lysine/[LysW]-ornithine hydrolase (346 aa).

Position 68 (histidine 68) interacts with Zn(2+). Residue aspartate 70 is part of the active site. Aspartate 92 contacts Zn(2+). Glutamate 122 (proton acceptor) is an active-site residue. Zn(2+)-binding residues include glutamate 123, glutamate 146, and histidine 317.

This sequence belongs to the peptidase M20A family. LysK subfamily. The cofactor is Zn(2+). Requires Co(2+) as cofactor.

It is found in the cytoplasm. The enzyme catalyses [amino-group carrier protein]-C-terminal-gamma-(L-lysyl)-L-glutamate + H2O = [amino-group carrier protein]-C-terminal-L-glutamate + L-lysine. It catalyses the reaction [amino-group carrier protein]-C-terminal-gamma-(L-ornithyl)-L-glutamate + H2O = [amino-group carrier protein]-C-terminal-L-glutamate + L-ornithine. It participates in amino-acid biosynthesis; L-lysine biosynthesis via AAA pathway; L-lysine from L-alpha-aminoadipate (Thermus route): step 5/5. Its pathway is amino-acid biosynthesis; L-arginine biosynthesis. Its function is as follows. Catalyzes the release of L-lysine from [LysW]-gamma-L-lysine and the release of L-ornithine from [LysW]-L-ornithine. The sequence is that of [LysW]-lysine/[LysW]-ornithine hydrolase from Saccharolobus islandicus (strain M.16.4 / Kamchatka #3) (Sulfolobus islandicus).